The chain runs to 317 residues: tRNA dimethylallyltransferase (317 aa).

Residue 16–23 (GPTASGKS) participates in ATP binding. 18–23 (TASGKS) contacts substrate. 3 interaction with substrate tRNA regions span residues 41–44 (DSAQ), 165–169 (QRIQR), and 247–252 (RCVGYR).

It belongs to the IPP transferase family. Monomer. Mg(2+) is required as a cofactor.

It carries out the reaction adenosine(37) in tRNA + dimethylallyl diphosphate = N(6)-dimethylallyladenosine(37) in tRNA + diphosphate. In terms of biological role, catalyzes the transfer of a dimethylallyl group onto the adenine at position 37 in tRNAs that read codons beginning with uridine, leading to the formation of N6-(dimethylallyl)adenosine (i(6)A). In Nitrosomonas eutropha (strain DSM 101675 / C91 / Nm57), this protein is tRNA dimethylallyltransferase.